The primary structure comprises 511 residues: Immunoglobulin-binding protein EibD (511 aa).

A signal peptide spans 1 to 26 (MSKKFTMTLLSSSLAGLLVMSGGVSA). Residues 27 to 417 (QNGTYSVLQD…SKAIAANTRT (391 aa)) form a surface exposed passenger domain region. The Extracellular segment spans residues 27–460 (QNGTYSVLQD…GLFQPYSVGK (434 aa)). Positions 161–287 (DAKASGEFSV…TGTESDKTYG (127 aa)) are head domain. Residues 288-303 (TRVLGGLSDGTRNSDA) are neck. The right-handed coiled-coil (RHcc) stretch occupies residues 304–349 (ATVGQLNRKVGGVYDDVKARITVESEKQKKYTDQKTSEVNEKVEAR). Residues 304–349 (ATVGQLNRKVGGVYDDVKARITVESEKQKKYTDQKTSEVNEKVEAR) adopt a coiled-coil conformation. A required to bind IgA region spans residues 329–344 (EKQKKYTDQKTSEVNE). Residues 350–375 (TTVGVDSDGKLTRAEGATKTIAVNDG) form a saddle domain region. Residues 376–441 (LVALSGRTDR…INENHKEMKR (66 aa)) adopt a coiled-coil conformation. Positions 376 to 441 (LVALSGRTDR…INENHKEMKR (66 aa)) are left-handed coiled-coil (LHcc). The required to bind IgG stretch occupies residues 384–418 (DRIDYAVGAIDGRVTRNTQSIEKNSKAIAANTRTL). The tract at residues 418–460 (LQQHSARLDSQQRQINENHKEMKRAAAQSAALTGLFQPYSVGK) is outer membrane translocation of the passenger domain. 4 beta stranded membrane passes run 461–471 (FNATAAVGGYS), 474–485 (QALAVGVGYRFN), 488–497 (TAAKAGVAFS), and 501–511 (ASWNVGVNFEF). The segment at 461-511 (FNATAAVGGYSDQQALAVGVGYRFNEQTAAKAGVAFSDGDASWNVGVNFEF) is translocator domain.

Belongs to the autotransporter-2 (AT-2) (TC 1.B.40) family. Eib subfamily. As to quaternary structure, homotrimer; can probably form mixed heterotrimers in vivo. Will form mixed heterotrimers with EibA or EibC; these are correctly located in the outer membrane and bind IgG Fc, although less well than homotrimers. In denaturing gels runs as a band of about 210 kDa. Binds the Fc portion of immunoglobulins; binds more than 1 Fc per subunit, can be modeled to bind 3 Fc per trimer.

It localises to the cell surface. Its subcellular location is the cell outer membrane. In terms of biological role, binds (in a non-immune fashion) to the Fc portion of human IgA and IgG; binding occurs on the cell surface. Confers the ability to survive exposure to human serum exposure. Binds to the Fc portion of human IgG, IgA and to whole mouse antibodies also via Fc. Upon overexpression cells acquire an extra cell surface layer that forms a zipper-like contact between cells; cells autoagglutinate and form biofilm more readily, suggesting it may play a role in defense against a host. This is Immunoglobulin-binding protein EibD from Escherichia coli.